The sequence spans 259 residues: Bisphosphoglycerate mutase (259 aa).

Residue Ser2 is modified to N-acetylserine. Residues 10–17 (RHGEGAWN), 23–24 (CS), Arg62, 89–92 (ERHY), Arg100, and 116–117 (RR) each bind substrate. Catalysis depends on His11, which acts as the Tele-phosphohistidine intermediate. Glu89 acts as the Proton donor/acceptor in catalysis. Thr122 carries the post-translational modification Phosphothreonine. Residue 189–190 (GN) coordinates substrate.

The protein belongs to the phosphoglycerate mutase family. BPG-dependent PGAM subfamily. As to quaternary structure, homodimer.

It catalyses the reaction (2R)-3-phospho-glyceroyl phosphate = (2R)-2,3-bisphosphoglycerate + H(+). The enzyme catalyses (2R)-2-phosphoglycerate = (2R)-3-phosphoglycerate. At alkaline pH BPGM favors the synthase reaction; however, at lower pH the phosphatase reaction is dominant. Inhibited by citrate. Plays a major role in regulating hemoglobin oxygen affinity by controlling the levels of its allosteric effector 2,3-bisphosphoglycerate (2,3-BPG). Also exhibits mutase (EC 5.4.2.11) activity. This chain is Bisphosphoglycerate mutase (BPGM), found in Macaca fascicularis (Crab-eating macaque).